Here is a 157-residue protein sequence, read N- to C-terminus: Crossover junction endodeoxyribonuclease RuvC (157 aa).

Residues aspartate 7, glutamate 67, and aspartate 140 contribute to the active site. 3 residues coordinate Mg(2+): aspartate 7, glutamate 67, and aspartate 140.

The protein belongs to the RuvC family. As to quaternary structure, homodimer which binds Holliday junction (HJ) DNA. The HJ becomes 2-fold symmetrical on binding to RuvC with unstacked arms; it has a different conformation from HJ DNA in complex with RuvA. In the full resolvosome a probable DNA-RuvA(4)-RuvB(12)-RuvC(2) complex forms which resolves the HJ. Requires Mg(2+) as cofactor.

The protein resides in the cytoplasm. The enzyme catalyses Endonucleolytic cleavage at a junction such as a reciprocal single-stranded crossover between two homologous DNA duplexes (Holliday junction).. In terms of biological role, the RuvA-RuvB-RuvC complex processes Holliday junction (HJ) DNA during genetic recombination and DNA repair. Endonuclease that resolves HJ intermediates. Cleaves cruciform DNA by making single-stranded nicks across the HJ at symmetrical positions within the homologous arms, yielding a 5'-phosphate and a 3'-hydroxyl group; requires a central core of homology in the junction. The consensus cleavage sequence is 5'-(A/T)TT(C/G)-3'. Cleavage occurs on the 3'-side of the TT dinucleotide at the point of strand exchange. HJ branch migration catalyzed by RuvA-RuvB allows RuvC to scan DNA until it finds its consensus sequence, where it cleaves and resolves the cruciform DNA. The protein is Crossover junction endodeoxyribonuclease RuvC of Rickettsia rickettsii (strain Iowa).